The chain runs to 161 residues: 2-C-methyl-D-erythritol 2,4-cyclodiphosphate synthase (161 aa).

Residues Asp-10 and His-12 each coordinate a divalent metal cation. Residues 10–12 and 36–37 contribute to the 4-CDP-2-C-methyl-D-erythritol 2-phosphate site; these read DVH and HS. Residue His-44 coordinates a divalent metal cation. Residues 58–60, 63–67, and Arg-144 contribute to the 4-CDP-2-C-methyl-D-erythritol 2-phosphate site; these read DIG and FSDTD.

It belongs to the IspF family. In terms of assembly, homotrimer. Requires a divalent metal cation as cofactor.

The catalysed reaction is 4-CDP-2-C-methyl-D-erythritol 2-phosphate = 2-C-methyl-D-erythritol 2,4-cyclic diphosphate + CMP. It participates in isoprenoid biosynthesis; isopentenyl diphosphate biosynthesis via DXP pathway; isopentenyl diphosphate from 1-deoxy-D-xylulose 5-phosphate: step 4/6. Involved in the biosynthesis of isopentenyl diphosphate (IPP) and dimethylallyl diphosphate (DMAPP), two major building blocks of isoprenoid compounds. Catalyzes the conversion of 4-diphosphocytidyl-2-C-methyl-D-erythritol 2-phosphate (CDP-ME2P) to 2-C-methyl-D-erythritol 2,4-cyclodiphosphate (ME-CPP) with a corresponding release of cytidine 5-monophosphate (CMP). This Burkholderia ambifaria (strain MC40-6) protein is 2-C-methyl-D-erythritol 2,4-cyclodiphosphate synthase.